Consider the following 69-residue polypeptide: Large ribosomal subunit protein eL38z/eL38y (69 aa).

The protein belongs to the eukaryotic ribosomal protein eL38 family.

The sequence is that of Large ribosomal subunit protein eL38z/eL38y (RPL38A) from Arabidopsis thaliana (Mouse-ear cress).